The following is a 468-amino-acid chain: O-methyltransferase lcsG (468 aa).

A compositionally biased stretch (polar residues) spans 1–12 (MGDNVQSDTTAA). The interval 1-29 (MGDNVQSDTTAAQAGITDAPTAPTSAPVS) is disordered. Residues 298–299 (GG), D321, 348–349 (DF), and K363 contribute to the S-adenosyl-L-methionine site.

It belongs to the class I-like SAM-binding methyltransferase superfamily. Cation-independent O-methyltransferase family.

Its pathway is secondary metabolite biosynthesis. Functionally, O-methyltransferase; part of the gene cluster that mediates the biosynthesis of the lipopeptide antibiotics leucinostatins that show extensive biological activities, including antimalarial, antiviral, antibacterial, antifungal, and antitumor activities, as well as phytotoxic. Leucinostatin A contains nine amino acid residues, including the unusual amino acid 4-methyl-L-proline (MePro), 2-amino-6-hydroxy-4-methyl-8-oxodecanoic acid (AHyMeOA), 3-hydroxyleucine (HyLeu), alpha-aminoisobutyric acid (AIB), beta-Ala, a 4-methylhex-2-enoic acid at the N-terminus as well as a N1,N1-dimethylpropane-1,2-diamine (DPD) at the C-terminus. The biosynthesis of leucinostatins is probably initiated with the assembly of 4-methylhex-2-enoic acid by a reducing PKS. Two reducing polyketide synthases, lcsB and lcsC, have been identified in the cluster and it is not clear which is the one that assembles 4-methylhex-2-enoic acid since both contain KS, AT, DH, cMT, ER, KR and ACP domains. The polyketide residue might be transferred to the NRPS lcsA, mediated by two additional enzymes, the acyl-CoA ligase lcsD and the thioesterase lcsE. The linear polyketide carboxylic acid, which is released from PKS, is converted to a CoA thioester by lcsD, and then lcsE hydrolyzes the thiol bond and shuttles the polyketide intermediate to lcsA. The C domain of the first module catalyzed the condensation of 4-methylhex-2-enoic acid and MePro carried by domain A1, followed by successive condensations of nine amino acids to trigger the elongation of the linear peptide. A5 and A6 domains of lcsA are proposed to incorporate leucine, A2 AHyMeOA, and A3 incorporates HyLeu. A4, A7 and A8 incorporate AIB. The AHyMeOA in leucinostatin A activated by the A2 might be produced by the second PKS (lcsB or lcsC) present within the cluster. The MePro is probably produced via leucine cyclization and may originate from a separate pathway, independent of the cluster. Another nonproteinogenic amino acid, beta-Ala, could be produced by an aspartic acid decarboxylase also localized outside of the cluster. Two candidates are VFPBJ_01400 and VFPBJ_10476. The final peptide scaffold may be released by the NAD(P)H-dependent thioester reductase (TE) at the C-terminal region of lcsA. Transamination of the lcsA product by the transaminase lcsP may produce DPD at the C-terminus. Further hydroxylation steps performed alternatively by the cytochrome P450 monooxygenases lcsI, lcsK and lcsN then yield the non-methylated leucinostatins precursor. It is also possible that leucines can be hydroxylated prior to their incorporation into the peptide. Varying extents of methylation then lead to the formation of leucinostatins A and B. The sequence is that of O-methyltransferase lcsG from Purpureocillium lilacinum (Paecilomyces lilacinus).